The primary structure comprises 429 residues: MLLGPASGSPSPLLASLTLPARPLQPPLDLKHLLAFHLNGTTPLSLFPNFSTMDPVQKAVISHTFGVPSPLKKKLFISCNICHLRFNSANQAEAHYKGHRHARKLKAVEAAKSKQRPRNPTTNGTVVSSASPPASGSPGTPQSKGPASPPLGPSLQLPPTPDPSAGDPVHSAGDPVHSELCDAAASSSSSSCPPCSPDPSREAPGPEPAEGAVGSGVNGEGRGEKGRLYCPTCKVTVNSASQLQAHNTGAKHRWMVEGHQGAPRRGRGRPVSRGGTGHKTKRVIGNRGGRQGPSPPFHCALCQLHVNSETQLKQHMSSRRHKDRLAGKPPKSSSQHNKLQKHTALAVSVLKSKLALQKQLTKTLAARFLPGPLPTTAAAICALPGPLTLRPAATAAATLFPAPVLGPALFRSPAGAVRPAAGPILFAPY.

A Matrin-type 1 zinc finger spans residues 77–107 (ISCNICHLRFNSANQAEAHYKGHRHARKLKA). Disordered regions lie at residues 109 to 224 (EAAK…GRGE), 258 to 295 (GHQGAPRRGRGRPVSRGGTGHKTKRVIGNRGGRQGPSP), and 311 to 340 (QLKQHMSSRRHKDRLAGKPPKSSSQHNKLQ). Residues 125–146 (TVVSSASPPASGSPGTPQSKGP) are compositionally biased toward low complexity. Pro residues predominate over residues 147–162 (ASPPLGPSLQLPPTPD). Residues 181–193 (CDAAASSSSSSCP) show a composition bias toward low complexity. The Matrin-type 2 zinc finger occupies 225-259 (KGRLYCPTCKVTVNSASQLQAHNTGAKHRWMVEGH). Positions 262 to 284 (APRRGRGRPVSRGGTGHKTKRVI) are enriched in basic residues. Residues 297–327 (FHCALCQLHVNSETQLKQHMSSRRHKDRLAG) form a Matrin-type 3 zinc finger.

Its subcellular location is the nucleus. This chain is Zinc finger protein 385C, found in Mus musculus (Mouse).